A 40-amino-acid polypeptide reads, in one-letter code: Lucifensin (40 aa).

3 cysteine pairs are disulfide-bonded: Cys-3–Cys-30, Cys-16–Cys-36, and Cys-20–Cys-38.

Belongs to the invertebrate defensin family. Type 1 subfamily. The disulfide bonds are essential for antimicrobial activity. In terms of tissue distribution, larval fat body, hemolymph and salivary glands (at protein level).

It is found in the secreted. Its function is as follows. Shows strong antibacterial activity against the Gram-positive bacterium M.luteus. Also shows antibacterial activity against the Gram-positive bacteria E.fecalis, S.aureus, S.carnosus, S.pneumoniae and S.pyogenes and against a number of methicillin-resistant S.aureus and glycopeptide-intermediate S.aureus isolates. Does not show antibacterial activity against Gram-negative bacteria or antifungal activity against C.utilis. Shows slight antifungal activity against C.albicans. This Lucilia cuprina (Green bottle fly) protein is Lucifensin.